Reading from the N-terminus, the 125-residue chain is Large ribosomal subunit protein eL31 (125 aa).

Met1 carries the N-acetylmethionine modification. The residue at position 15 (Ser15) is a Phosphoserine. An N6-succinyllysine mark is found at Lys55 and Lys70. At Lys75 the chain carries N6-acetyllysine; alternate. Position 75 is an N6-succinyllysine; alternate (Lys75). Ser98 carries the post-translational modification Phosphoserine.

The protein belongs to the eukaryotic ribosomal protein eL31 family. In terms of assembly, component of the large ribosomal subunit.

Its subcellular location is the cytoplasm. In terms of biological role, component of the large ribosomal subunit. The ribosome is a large ribonucleoprotein complex responsible for the synthesis of proteins in the cell. This chain is Large ribosomal subunit protein eL31 (RPL31), found in Pongo abelii (Sumatran orangutan).